The primary structure comprises 430 residues: Ribosomal protein uS12 methylthiotransferase RimO (430 aa).

The MTTase N-terminal domain maps to 1–116 (MRVGIKVLGC…IANAIENGTD (116 aa)). 6 residues coordinate [4Fe-4S] cluster: Cys10, Cys46, Cys79, Cys148, Cys152, and Cys155. A Radical SAM core domain is found at 134-365 (LEERPYAYVK…LLQAEISNSR (232 aa)). The TRAM domain maps to 367-430 (DRFVGKKLKF…DEYDMWGSVI (64 aa)).

The protein belongs to the methylthiotransferase family. RimO subfamily. [4Fe-4S] cluster serves as cofactor.

It is found in the cytoplasm. It carries out the reaction L-aspartate(89)-[ribosomal protein uS12]-hydrogen + (sulfur carrier)-SH + AH2 + 2 S-adenosyl-L-methionine = 3-methylsulfanyl-L-aspartate(89)-[ribosomal protein uS12]-hydrogen + (sulfur carrier)-H + 5'-deoxyadenosine + L-methionine + A + S-adenosyl-L-homocysteine + 2 H(+). In terms of biological role, catalyzes the methylthiolation of an aspartic acid residue of ribosomal protein uS12. This is Ribosomal protein uS12 methylthiotransferase RimO from Thermotoga petrophila (strain ATCC BAA-488 / DSM 13995 / JCM 10881 / RKU-1).